The chain runs to 365 residues: Zinc finger MYND domain-containing protein 12 (365 aa).

Residues Cys17, Cys20, Cys28, Cys31, Cys37, His41, His50, and Cys54 each coordinate Zn(2+). An MYND-type; atypical zinc finger spans residues 17–54 (CEVCEAPAERVCAACTVTYYCGVVHQKADWDSIHEKIC). TPR repeat units lie at residues 172–205 (SLLH…ASCA) and 214–247 (SGGY…WHAY).

Expressed predominantly in the testis.

The protein resides in the cell projection. The protein localises to the cilium. It is found in the flagellum. Required for sperm flagellum function and male fertility. The sequence is that of Zinc finger MYND domain-containing protein 12 (ZMYND12) from Homo sapiens (Human).